The primary structure comprises 429 residues: 3-phosphoshikimate 1-carboxyvinyltransferase (429 aa).

The 3-phosphoshikimate site is built by Lys-11, Ser-12, and Arg-16. A phosphoenolpyruvate-binding site is contributed by Lys-11. Gly-82 and Arg-110 together coordinate phosphoenolpyruvate. Residues Ser-155, Gln-157, Asp-302, and Lys-329 each coordinate 3-phosphoshikimate. Residue Gln-157 participates in phosphoenolpyruvate binding. Asp-302 (proton acceptor) is an active-site residue. The phosphoenolpyruvate site is built by Arg-333 and Arg-385.

Belongs to the EPSP synthase family. As to quaternary structure, monomer.

Its subcellular location is the cytoplasm. The catalysed reaction is 3-phosphoshikimate + phosphoenolpyruvate = 5-O-(1-carboxyvinyl)-3-phosphoshikimate + phosphate. It functions in the pathway metabolic intermediate biosynthesis; chorismate biosynthesis; chorismate from D-erythrose 4-phosphate and phosphoenolpyruvate: step 6/7. In terms of biological role, catalyzes the transfer of the enolpyruvyl moiety of phosphoenolpyruvate (PEP) to the 5-hydroxyl of shikimate-3-phosphate (S3P) to produce enolpyruvyl shikimate-3-phosphate and inorganic phosphate. The sequence is that of 3-phosphoshikimate 1-carboxyvinyltransferase from Helicobacter pylori (strain HPAG1).